We begin with the raw amino-acid sequence, 833 residues long: Histone deacetylase HDA1 (833 aa).

Basic and acidic residues predominate over residues 1–13 (MSTGQEEHLDSKL). 2 disordered regions span residues 1–40 (MSTG…IQAS) and 760–791 (NGNG…SKRP). Positions 5–52 (QEEHLDSKLENQISEEENQSQNQNFPTAIEDSIQASIEKLDEVDDEIN) form a coiled coil. The span at 760–776 (NGNGNGNNGNSSNGGGN) shows a compositional bias: gly residues.

The protein belongs to the histone deacetylase family. HD type 2 subfamily. As to quaternary structure, interacts with BRG1.

It localises to the nucleus. The catalysed reaction is N(6)-acetyl-L-lysyl-[histone] + H2O = L-lysyl-[histone] + acetate. Its function is as follows. Responsible for the deacetylation of lysine residues on the N-terminal part of the core histones (H2A, H2B, H3 and H4). Histone deacetylation gives a tag for epigenetic repression and plays an important role in transcriptional regulation, cell cycle progression and developmental events. Histone deacetylases act via the formation of large multiprotein complexes. Deacetylates the YNG2 subunit of NuA4 histone acetyltransferase (HAT) module, leading to the reduction of YNG2 and NuA4 HAT at the promoters of hypha-specific genes. Plays a key role in the regulation of filamentous growth and virulence. Involved in the switch between two heritable states, the white and opaque states. These two cell types differ in many characteristics, including cell structure, mating competence, and virulence. Each state is heritable for many generations, and switching between states occurs stochastically at low frequency. The sequence is that of Histone deacetylase HDA1 (HDA1) from Candida albicans (strain SC5314 / ATCC MYA-2876) (Yeast).